Consider the following 166-residue polypeptide: MFLRSIFQTLCAVSFLAGSVFADSGVSIVSTPATTTVYLVRTVDCSSSEVTSQPVVTVYNVLKPDTVTFTVTETAGSYAKRSIEIDSDSVSPTSATTTTPVASATDVSVYSASIHVPTGNPPVDTHNPLSYDTEVTATTTFSIALPKFNKGDRVSSANTYSVSFVA.

Residues 1 to 22 (MFLRSIFQTLCAVSFLAGSVFA) form the signal peptide.

The protein resides in the endoplasmic reticulum. This chain is Protein adg1 (adg1), found in Schizosaccharomyces pombe (strain 972 / ATCC 24843) (Fission yeast).